We begin with the raw amino-acid sequence, 695 residues long: UvrABC system protein B (695 aa).

Residues 25-176 enclose the Helicase ATP-binding domain; it reads KSILEGHRFQ…NQREVLRDLA (152 aa). An ATP-binding site is contributed by 38–45; the sequence is GATGTGKT. Residues 91 to 114 carry the Beta-hairpin motif; the sequence is YYDYYQPEAYVPSTDTYIAKSSSI. A Helicase C-terminal domain is found at 454 to 617; sequence LLGEIYLRLE…ITPKPIIKKN (164 aa). The 36-residue stretch at 652–687 folds into the UVR domain; that stretch reads PELIGQLELKMKAAAKNLEFEEAAQLRDQIKKLRQR.

The protein belongs to the UvrB family. As to quaternary structure, forms a heterotetramer with UvrA during the search for lesions. Interacts with UvrC in an incision complex.

It is found in the cytoplasm. The UvrABC repair system catalyzes the recognition and processing of DNA lesions. A damage recognition complex composed of 2 UvrA and 2 UvrB subunits scans DNA for abnormalities. Upon binding of the UvrA(2)B(2) complex to a putative damaged site, the DNA wraps around one UvrB monomer. DNA wrap is dependent on ATP binding by UvrB and probably causes local melting of the DNA helix, facilitating insertion of UvrB beta-hairpin between the DNA strands. Then UvrB probes one DNA strand for the presence of a lesion. If a lesion is found the UvrA subunits dissociate and the UvrB-DNA preincision complex is formed. This complex is subsequently bound by UvrC and the second UvrB is released. If no lesion is found, the DNA wraps around the other UvrB subunit that will check the other stand for damage. This Synechococcus sp. (strain JA-3-3Ab) (Cyanobacteria bacterium Yellowstone A-Prime) protein is UvrABC system protein B.